Consider the following 187-residue polypeptide: UPF0340 protein SPG_0604 (187 aa).

Belongs to the UPF0340 family.

The polypeptide is UPF0340 protein SPG_0604 (Streptococcus pneumoniae serotype 19F (strain G54)).